The primary structure comprises 177 residues: Protein ParB (177 aa).

The first 26 residues, 1–26 (MKRRSYAMLRAAAALAVLVVASPAWA), serve as a signal peptide directing secretion. The region spanning 27-157 (ELRGEVVRII…RGKRVGLWSD (131 aa)) is the TNase-like domain. Residues Arg53, Glu61, and Arg95 contribute to the active site.

In terms of assembly, monomer. Requires Ca(2+) as cofactor. In terms of processing, the N-terminus is blocked.

The protein localises to the secreted. Its activity is regulated as follows. Endonuclease activity is inhibited by EDTA. Involved in plasmid partition. An endonuclease that acts on supercoiled dsDNA, converting it first to open circular DNA and then linearizing it. Preferentially cleaves regions in dsDNA that are capable of forming ssDNA, such as AT-rich regions and sequences that can form cruciforms. Has poor endonucleolytic activity on linear DNA, has 5'-3' exonuclease activity on dsDNA cleaving generating 3'-phosphonucleotides. This is Protein ParB from Escherichia coli.